We begin with the raw amino-acid sequence, 426 residues long: Glutamate-1-semialdehyde 2,1-aminomutase (426 aa).

K265 is modified (N6-(pyridoxal phosphate)lysine).

Belongs to the class-III pyridoxal-phosphate-dependent aminotransferase family. HemL subfamily. Homodimer. It depends on pyridoxal 5'-phosphate as a cofactor.

It is found in the cytoplasm. The enzyme catalyses (S)-4-amino-5-oxopentanoate = 5-aminolevulinate. It functions in the pathway porphyrin-containing compound metabolism; protoporphyrin-IX biosynthesis; 5-aminolevulinate from L-glutamyl-tRNA(Glu): step 2/2. In Salmonella arizonae (strain ATCC BAA-731 / CDC346-86 / RSK2980), this protein is Glutamate-1-semialdehyde 2,1-aminomutase.